The sequence spans 396 residues: Formate-dependent phosphoribosylglycinamide formyltransferase (396 aa).

N(1)-(5-phospho-beta-D-ribosyl)glycinamide-binding positions include 24-25 (EL) and Glu-84. ATP is bound by residues Arg-116, Lys-157, 162 to 167 (SSGKGQ), 197 to 200 (EGFV), and Glu-205. The ATP-grasp domain occupies 121-310 (RLAAETLGIK…EFALHVRAIL (190 aa)). Mg(2+) contacts are provided by Glu-269 and Glu-281. N(1)-(5-phospho-beta-D-ribosyl)glycinamide contacts are provided by residues Asp-288, Lys-359, and 366–367 (RR).

The protein belongs to the PurK/PurT family. As to quaternary structure, homodimer.

It carries out the reaction N(1)-(5-phospho-beta-D-ribosyl)glycinamide + formate + ATP = N(2)-formyl-N(1)-(5-phospho-beta-D-ribosyl)glycinamide + ADP + phosphate + H(+). It participates in purine metabolism; IMP biosynthesis via de novo pathway; N(2)-formyl-N(1)-(5-phospho-D-ribosyl)glycinamide from N(1)-(5-phospho-D-ribosyl)glycinamide (formate route): step 1/1. Its function is as follows. Involved in the de novo purine biosynthesis. Catalyzes the transfer of formate to 5-phospho-ribosyl-glycinamide (GAR), producing 5-phospho-ribosyl-N-formylglycinamide (FGAR). Formate is provided by PurU via hydrolysis of 10-formyl-tetrahydrofolate. This Psychromonas ingrahamii (strain DSM 17664 / CCUG 51855 / 37) protein is Formate-dependent phosphoribosylglycinamide formyltransferase.